The sequence spans 400 residues: Formate-dependent phosphoribosylglycinamide formyltransferase (400 aa).

N(1)-(5-phospho-beta-D-ribosyl)glycinamide is bound by residues 22 to 23 (EL) and E82. ATP is bound by residues R114, K155, 160 to 165 (SSGKGQ), 195 to 198 (EGFV), and E203. An ATP-grasp domain is found at 119–308 (RLAAEELGLS…EFALHARALL (190 aa)). Mg(2+)-binding residues include E267 and E279. Residues D286, K356, and 363–364 (RR) each bind N(1)-(5-phospho-beta-D-ribosyl)glycinamide.

Belongs to the PurK/PurT family. In terms of assembly, homodimer.

It catalyses the reaction N(1)-(5-phospho-beta-D-ribosyl)glycinamide + formate + ATP = N(2)-formyl-N(1)-(5-phospho-beta-D-ribosyl)glycinamide + ADP + phosphate + H(+). Its pathway is purine metabolism; IMP biosynthesis via de novo pathway; N(2)-formyl-N(1)-(5-phospho-D-ribosyl)glycinamide from N(1)-(5-phospho-D-ribosyl)glycinamide (formate route): step 1/1. Functionally, involved in the de novo purine biosynthesis. Catalyzes the transfer of formate to 5-phospho-ribosyl-glycinamide (GAR), producing 5-phospho-ribosyl-N-formylglycinamide (FGAR). Formate is provided by PurU via hydrolysis of 10-formyl-tetrahydrofolate. In Hahella chejuensis (strain KCTC 2396), this protein is Formate-dependent phosphoribosylglycinamide formyltransferase.